The chain runs to 371 residues: Alanine racemase (371 aa).

Lys-35 functions as the Proton acceptor; specific for D-alanine in the catalytic mechanism. Lys-35 carries the post-translational modification N6-(pyridoxal phosphate)lysine. Arg-130 is a substrate binding site. Tyr-256 serves as the catalytic Proton acceptor; specific for L-alanine. Met-304 is a binding site for substrate.

The protein belongs to the alanine racemase family. The cofactor is pyridoxal 5'-phosphate.

The enzyme catalyses L-alanine = D-alanine. The protein operates within amino-acid biosynthesis; D-alanine biosynthesis; D-alanine from L-alanine: step 1/1. Its function is as follows. Catalyzes the interconversion of L-alanine and D-alanine. May also act on other amino acids. The protein is Alanine racemase (alr) of Verminephrobacter eiseniae (strain EF01-2).